Here is a 295-residue protein sequence, read N- to C-terminus: Probable porphobilinogen deaminase (295 aa).

Residue Cys-234 is modified to S-(dipyrrolylmethanemethyl)cysteine.

Belongs to the HMBS family. Dipyrromethane serves as cofactor.

It catalyses the reaction 4 porphobilinogen + H2O = hydroxymethylbilane + 4 NH4(+). It functions in the pathway porphyrin-containing compound metabolism; protoporphyrin-IX biosynthesis; coproporphyrinogen-III from 5-aminolevulinate: step 2/4. Its function is as follows. Tetrapolymerization of the monopyrrole PBG into the hydroxymethylbilane pre-uroporphyrinogen in several discrete steps. In Thermoplasma acidophilum (strain ATCC 25905 / DSM 1728 / JCM 9062 / NBRC 15155 / AMRC-C165), this protein is Probable porphobilinogen deaminase (hemC).